The primary structure comprises 359 residues: tRNA-specific 2-thiouridylase MnmA (359 aa).

ATP contacts are provided by residues 9–16 and methionine 35; that span reads GISGGVDS. An interaction with target base in tRNA region spans residues 95-97; sequence NPD. Residue cysteine 100 is the Nucleophile of the active site. Residues cysteine 100 and cysteine 197 are joined by a disulfide bond. Residue glycine 124 coordinates ATP. The tract at residues 147–149 is interaction with tRNA; that stretch reads KDQ. Catalysis depends on cysteine 197, which acts as the Cysteine persulfide intermediate. An interaction with tRNA region spans residues 309–310; it reads RY.

This sequence belongs to the MnmA/TRMU family.

The protein resides in the cytoplasm. The catalysed reaction is S-sulfanyl-L-cysteinyl-[protein] + uridine(34) in tRNA + AH2 + ATP = 2-thiouridine(34) in tRNA + L-cysteinyl-[protein] + A + AMP + diphosphate + H(+). In terms of biological role, catalyzes the 2-thiolation of uridine at the wobble position (U34) of tRNA, leading to the formation of s(2)U34. The sequence is that of tRNA-specific 2-thiouridylase MnmA from Francisella tularensis subsp. holarctica (strain FTNF002-00 / FTA).